Reading from the N-terminus, the 347-residue chain is Queuosine 5'-phosphate N-glycosylase/hydrolase (347 aa).

Positions 53, 237, 239, 321, and 326 each coordinate queuine. The active-site Nucleophile or transition state stabilizer is the D239.

Belongs to the QNG1 protein family.

The enzyme catalyses queuosine 5'-phosphate + H2O = queuine + D-ribose 5-phosphate. Catalyzes the hydrolysis of queuosine 5'-phosphate, releasing the nucleobase queuine (q). Is required for salvage of queuine from exogenous queuosine (Q) that is imported and then converted to queuosine 5'-phosphate intracellularly. This is Queuosine 5'-phosphate N-glycosylase/hydrolase from Nematostella vectensis (Starlet sea anemone).